The following is a 355-amino-acid chain: Protein RecA (355 aa).

73-80 (GPESSGKT) is a binding site for ATP.

It belongs to the RecA family.

The protein resides in the cytoplasm. Its function is as follows. Can catalyze the hydrolysis of ATP in the presence of single-stranded DNA, the ATP-dependent uptake of single-stranded DNA by duplex DNA, and the ATP-dependent hybridization of homologous single-stranded DNAs. It interacts with LexA causing its activation and leading to its autocatalytic cleavage. This Solidesulfovibrio magneticus (strain ATCC 700980 / DSM 13731 / RS-1) (Desulfovibrio magneticus) protein is Protein RecA.